Here is a 74-residue protein sequence, read N- to C-terminus: Kappa-stichotoxin-Sgt4a (74 aa).

The signal sequence occupies residues 1–22 (MKFQVIAAVLLIEFCLCVVVTA). The propeptide occupies 23-39 (RMELQDVEDVENGFQKR). Positions 42–74 (CIDTIPQSRCTAFQCKHSMKYRLSFCRKTCGTC) constitute a ShKT domain. 3 cysteine pairs are disulfide-bonded: Cys-42/Cys-74, Cys-51/Cys-67, and Cys-56/Cys-71.

It belongs to the sea anemone type 1 potassium channel toxin family. Type 1a subfamily.

The protein localises to the secreted. Its subcellular location is the nematocyst. Inhibits voltage-gated potassium channels (Kv) with higher potency for Kv1.1/KCNA1 and Kv1.3/KCNA3. The chain is Kappa-stichotoxin-Sgt4a from Stichodactyla gigantea (Giant carpet anemone).